The sequence spans 146 residues: VHLTGEEKSAVTTLWGKVNVEEVGGEALGRLLVVYPWTQRFFESFGDLSSPDAVMNNPKVKAHGKKVLGAFSDGLAHLDNLKGTFAQLSELHCDKLHVDPENFRLLGNVLVCVLAHHFGKEFTPQVQAAYQKVVAGVANALAHKYH.

The residue at position 1 (Val-1) is an N-acetylvaline. The 145-residue stretch at 2-146 (HLTGEEKSAV…VANALAHKYH (145 aa)) folds into the Globin domain. At Thr-12 the chain carries Phosphothreonine. Ser-44 carries the post-translational modification Phosphoserine. Position 59 is an N6-acetyllysine (Lys-59). His-63 contacts heme b. Lys-82 bears the N6-acetyllysine mark. His-92 serves as a coordination point for heme b. Cys-93 bears the S-nitrosocysteine mark. Lys-144 carries the N6-acetyllysine modification.

The protein belongs to the globin family. In terms of assembly, heterotetramer of two alpha chains and two beta chains. In terms of tissue distribution, red blood cells.

Its function is as follows. Involved in oxygen transport from the lung to the various peripheral tissues. This Saguinus oedipus (Cotton-top tamarin) protein is Hemoglobin subunit beta (HBB).